The primary structure comprises 333 residues: Beta-ketoacyl-[acyl-carrier-protein] synthase III (333 aa).

Active-site residues include C114 and H255. Positions 256–260 (QANYR) are ACP-binding. The active site involves N285.

Belongs to the thiolase-like superfamily. FabH family. As to quaternary structure, homodimer.

It localises to the cytoplasm. The catalysed reaction is malonyl-[ACP] + acetyl-CoA + H(+) = 3-oxobutanoyl-[ACP] + CO2 + CoA. Its pathway is lipid metabolism; fatty acid biosynthesis. Its function is as follows. Catalyzes the condensation reaction of fatty acid synthesis by the addition to an acyl acceptor of two carbons from malonyl-ACP. Catalyzes the first condensation reaction which initiates fatty acid synthesis and may therefore play a role in governing the total rate of fatty acid production. Possesses both acetoacetyl-ACP synthase and acetyl transacylase activities. Its substrate specificity determines the biosynthesis of branched-chain and/or straight-chain of fatty acids. In Aliarcobacter butzleri (strain RM4018) (Arcobacter butzleri), this protein is Beta-ketoacyl-[acyl-carrier-protein] synthase III.